The sequence spans 254 residues: Ferritin, chloroplastic (254 aa).

The transit peptide at 1 to 48 (MALAPSKVSPFSGFSLSDGVGAVRNPTCSVSLSFLNKKVGSRNLGVSA) directs the protein to the chloroplast. The extension peptide (EP) stretch occupies residues 49 to 81 (STVPLTGVIFEPFEEVKKEELAVPTAGQVSLAR). One can recognise a Ferritin-like diiron domain in the interval 82 to 235 (QYYADECESA…EYVAQLRMVG (154 aa)). Fe cation is bound by residues glutamate 99, glutamate 134, histidine 137, glutamate 183, and glutamine 217.

The protein belongs to the ferritin family. Oligomer of 24 subunits. There are two types of subunits: L (light) chain and H (heavy) chain. The major chain can be light or heavy, depending on the species and tissue type. The functional molecule forms a roughly spherical shell with a diameter of 12 nm and contains a central cavity into which the insoluble mineral iron core is deposited.

It is found in the plastid. The protein resides in the chloroplast. It carries out the reaction 4 Fe(2+) + O2 + 4 H(+) = 4 Fe(3+) + 2 H2O. Functionally, stores iron in a soluble, non-toxic, readily available form. Important for iron homeostasis. Has ferroxidase activity. Iron is taken up in the ferrous form and deposited as ferric hydroxides after oxidation. This is Ferritin, chloroplastic (PFE) from Phaseolus vulgaris (Kidney bean).